We begin with the raw amino-acid sequence, 210 residues long: Homeobox protein Rhox5 (210 aa).

The interval 29–117 is disordered; it reads KAEAFLQAGE…KNGKPEDRQM (89 aa). A DNA-binding region (homeobox; atypical) is located at residues 117–175; sequence MPLQGSRFAQQRLSELQSILQRTNSFDVPREDLYRLMDTCVARVQNWFKIRRAAARRNR.

It is found in the nucleus. In terms of biological role, transcription factor required for differentiation of embryonic stem cells (ESCs) into primordial germ cells. This Mus minutoides (Southern African pygmy mouse) protein is Homeobox protein Rhox5 (Rhox5).